The primary structure comprises 382 residues: Zinc metalloproteinase nas-7 (382 aa).

Positions methionine 1 to glycine 18 are cleaved as a signal peptide. A propeptide spanning residues histidine 19–arginine 79 is cleaved from the precursor. Positions asparagine 80–proline 273 constitute a Peptidase M12A domain. 5 disulfides stabilise this stretch: cysteine 122–cysteine 272, cysteine 144–cysteine 163, cysteine 348–cysteine 382, cysteine 355–cysteine 375, and cysteine 362–cysteine 379. A Zn(2+)-binding site is contributed by histidine 171. Glutamate 172 is a catalytic residue. Residues histidine 175 and histidine 181 each coordinate Zn(2+). One can recognise a ShKT domain in the interval cysteine 348–cysteine 382.

Requires Zn(2+) as cofactor. As to expression, expressed in the head of adult hermaphrodites but not within pharynx cells. Expressed in pharyngeal muscles, mc cells, intestine, hypodermal seam cells, arcade cells, spermatheca, vulva and rectal epithelial cells.

Its subcellular location is the secreted. Functionally, metalloprotease. In Caenorhabditis elegans, this protein is Zinc metalloproteinase nas-7 (nas-7).